A 989-amino-acid polypeptide reads, in one-letter code: Translation initiation factor IF-2 (989 aa).

Disordered regions lie at residues 43 to 219 (KRRR…LQAR) and 234 to 379 (EARR…GGAR). Residues 72-87 (NTPNKDTAVTQTATKN) are compositionally biased toward polar residues. The segment covering 105-146 (PKPVAAEATAQETSKAAPAAAQPVAEKEAAAPASAEAAKSAA) has biased composition (low complexity). The segment covering 149–159 (VTDRGAKKTTE) has biased composition (basic and acidic residues). The segment covering 160–171 (KNGANASGNRPS) has biased composition (polar residues). Residues 234–293 (EARRREDRLKQEADLEEQRRIEEKRRLEAEAKVEAEKQAALKEKEKAEAKARAKAEKEAK) are compositionally biased toward basic and acidic residues. A compositionally biased stretch (low complexity) spans 294-303 (AAQAKTAGAA). Positions 342–361 (PRREAPRPAMRDRKGEDRRQ) are enriched in basic and acidic residues. The tr-type G domain maps to 489-659 (SRPPVVTIMG…LLQAEMLELK (171 aa)). Residues 498 to 505 (GHVDHGKT) are G1. A GTP-binding site is contributed by 498–505 (GHVDHGKT). Positions 523 to 527 (GITQH) are G2. Positions 545-548 (DTPG) are G3. Residues 545-549 (DTPGH) and 599-602 (NKMD) contribute to the GTP site. The segment at 599–602 (NKMD) is G4. The G5 stretch occupies residues 635–637 (SAA).

The protein belongs to the TRAFAC class translation factor GTPase superfamily. Classic translation factor GTPase family. IF-2 subfamily.

The protein resides in the cytoplasm. In terms of biological role, one of the essential components for the initiation of protein synthesis. Protects formylmethionyl-tRNA from spontaneous hydrolysis and promotes its binding to the 30S ribosomal subunits. Also involved in the hydrolysis of GTP during the formation of the 70S ribosomal complex. In Zymomonas mobilis subsp. mobilis (strain ATCC 31821 / ZM4 / CP4), this protein is Translation initiation factor IF-2.